The chain runs to 148 residues: MNKYARQLKIREILHQNSVGNQHDLLQLLHDSGMRVAQATLSRDCAELGIIRSRTNGNFKMLLPDDDPDKIIKGLVGVEVLSVNANETSIIIMTLPGRAHGVGSWLDQLKSPLILGTIAGDDTVLVIPSSVLNISALKSYIHKNLSKN.

The protein belongs to the ArgR family.

The protein localises to the cytoplasm. It participates in amino-acid biosynthesis; L-arginine biosynthesis [regulation]. Its function is as follows. Regulates arginine biosynthesis genes. This chain is Arginine repressor, found in Pelodictyon phaeoclathratiforme (strain DSM 5477 / BU-1).